A 126-amino-acid polypeptide reads, in one-letter code: Small ribosomal subunit protein uS13c (126 aa).

The segment at 97–126 is disordered; sequence PLRGQRTRTNARTRRGGKKTVAGKKKAPRK. The segment covering 101–126 has biased composition (basic residues); it reads QRTRTNARTRRGGKKTVAGKKKAPRK.

The protein belongs to the universal ribosomal protein uS13 family. As to quaternary structure, part of the 30S ribosomal subunit.

The protein localises to the plastid. Its subcellular location is the chloroplast. In terms of biological role, located at the top of the head of the 30S subunit, it contacts several helices of the 16S rRNA. The chain is Small ribosomal subunit protein uS13c from Pyropia yezoensis (Susabi-nori).